The following is a 196-amino-acid chain: Rac-like GTP-binding protein RAC9 (196 aa).

Position 13-20 (13-20 (GDGAVGKT)) interacts with GTP. The Effector region motif lies at 35-43 (YVPTVFDNF). GTP is bound by residues 60 to 64 (DTAGQ) and 118 to 121 (TKLD). Cys-193 bears the Cysteine methyl ester mark. Residue Cys-193 is the site of S-geranylgeranyl cysteine attachment. Residues 194–196 (AFL) constitute a propeptide, removed in mature form.

It belongs to the small GTPase superfamily. Rho family.

The protein resides in the cytoplasm. It is found in the membrane. Inactive GDP-bound Rho GTPases reside in the cytosol, are found in a complex with Rho GDP-dissociation inhibitors (Rho GDIs), and are released from the GDI protein in order to translocate to membranes upon activation. This is Rac-like GTP-binding protein RAC9 (RAC9) from Gossypium hirsutum (Upland cotton).